A 482-amino-acid chain; its full sequence is MTISVQNKNVGRITQIIGPVLDITFSAGKVPNIYNALVVTGKTPSGDEIRVTCEVQQLLGDNCVRAVSMNATDGLMRGLEVIDTGTALTVPVGEATLGRIFNVLGETVDNLGTVGNKQGLPIHRPAPAFVDLDTKLSIFETGIKVVDLLAPYRRGGKIGLFGGAGVGKTVLIMELINNIAKAHGGVSVFGGVGERTREGNDLYMEMKESKVINAENLSESKVALVYGQMNEPPGARMRVALTALTMAEYFRDVNKQDVLLFIDNIFRFVQAGSEVSALLGRMPSAVGYQPTLASEMGGLQERITSTKDGSITSIQAVYVPADDLTDPAPATTFAHLDATTVLSRGLAAKGIYPAVDPLDSTSTMLQPWIVSKEHYECAQNVKQTLQRYKELQDIIAILGLDELAEEDRLLVARARKIERFLSQPFFVAEVFTGAPGKYVSLTETIKGFNLILSGEVDSLPEQAFYMAGTADDVLAQAEALSK.

An ATP-binding site is contributed by 162 to 169; the sequence is GGAGVGKT.

Belongs to the ATPase alpha/beta chains family. F-type ATPases have 2 components, CF(1) - the catalytic core - and CF(0) - the membrane proton channel. CF(1) has five subunits: alpha(3), beta(3), gamma(1), delta(1), epsilon(1). CF(0) has four main subunits: a(1), b(1), b'(1) and c(9-12).

It is found in the plastid. It localises to the chloroplast thylakoid membrane. The catalysed reaction is ATP + H2O + 4 H(+)(in) = ADP + phosphate + 5 H(+)(out). Functionally, produces ATP from ADP in the presence of a proton gradient across the membrane. The catalytic sites are hosted primarily by the beta subunits. The protein is ATP synthase subunit beta, chloroplastic of Pleurastrum terricola (Filamentous green alga).